We begin with the raw amino-acid sequence, 587 residues long: Beta-(1--&gt;2)glucan export ATP-binding/permease protein NdvA (587 aa).

The ABC transmembrane type-1 domain occupies Val21–Glu301. 6 helical membrane passes run Leu23–Gly43, Pro57–Ser77, Leu126–Leu146, Leu158–Ser178, Met248–Gly268, and Ile272–Met292. The 235-residue stretch at Ile335–Ala569 folds into the ABC transporter domain. Gly368–Thr375 contacts ATP.

Belongs to the ABC transporter superfamily. Beta-(1--&gt;2)glucan exporter (TC 3.A.1.108.1) family. Homodimer.

The protein resides in the cell inner membrane. It catalyses the reaction [(1-&gt;2)-beta-D-glucosyl](n)(in) + ATP + H2O = [(1-&gt;2)-beta-D-glucosyl](n)(out) + ADP + phosphate + H(+). Involved in beta-(1--&gt;2)glucan export. Transmembrane domains (TMD) form a pore in the inner membrane and the ATP-binding domain (NBD) is responsible for energy generation. This Rhizobium etli (strain ATCC 51251 / DSM 11541 / JCM 21823 / NBRC 15573 / CFN 42) protein is Beta-(1--&gt;2)glucan export ATP-binding/permease protein NdvA.